Reading from the N-terminus, the 222-residue chain is ATP-dependent dethiobiotin synthetase BioD (222 aa).

12–17 lines the ATP pocket; that stretch reads DAGKTV. Position 16 (Thr-16) interacts with Mg(2+). The active site involves Lys-37. Ser-41 provides a ligand contact to substrate. ATP-binding positions include Asp-54, 116-119, 176-177, 206-208, and Glu-213; these read EGAG, VQ, and PYL. Residues Asp-54 and Glu-116 each coordinate Mg(2+).

Belongs to the dethiobiotin synthetase family. As to quaternary structure, homodimer. Requires Mg(2+) as cofactor.

It localises to the cytoplasm. It carries out the reaction (7R,8S)-7,8-diammoniononanoate + CO2 + ATP = (4R,5S)-dethiobiotin + ADP + phosphate + 3 H(+). The protein operates within cofactor biosynthesis; biotin biosynthesis; biotin from 7,8-diaminononanoate: step 1/2. Its function is as follows. Catalyzes a mechanistically unusual reaction, the ATP-dependent insertion of CO2 between the N7 and N8 nitrogen atoms of 7,8-diaminopelargonic acid (DAPA, also called 7,8-diammoniononanoate) to form a ureido ring. The polypeptide is ATP-dependent dethiobiotin synthetase BioD (Idiomarina loihiensis (strain ATCC BAA-735 / DSM 15497 / L2-TR)).